An 876-amino-acid polypeptide reads, in one-letter code: Alanine--tRNA ligase (876 aa).

Residues His-564, His-568, Cys-666, and His-670 each contribute to the Zn(2+) site.

The protein belongs to the class-II aminoacyl-tRNA synthetase family. As to quaternary structure, homotetramer. Zn(2+) serves as cofactor.

It localises to the cytoplasm. The catalysed reaction is tRNA(Ala) + L-alanine + ATP = L-alanyl-tRNA(Ala) + AMP + diphosphate. Its function is as follows. Catalyzes the attachment of alanine to tRNA(Ala) in a two-step reaction: alanine is first activated by ATP to form Ala-AMP and then transferred to the acceptor end of tRNA(Ala). Also edits incorrectly charged Ser-tRNA(Ala) and Gly-tRNA(Ala) via its editing domain. The protein is Alanine--tRNA ligase of Salmonella paratyphi B (strain ATCC BAA-1250 / SPB7).